A 306-amino-acid chain; its full sequence is Shugoshin (306 aa).

Residues N28 to T75 are a coiled coil. Disordered stretches follow at residues P122–S196 and I223–F306. The segment covering P133–S161 has biased composition (basic and acidic residues). Polar residues predominate over residues N167 to N181. Positions G230 to A241 are enriched in pro residues.

The protein belongs to the shugoshin family.

It localises to the nucleus. It is found in the chromosome. The protein localises to the centromere. Functionally, plays a central role in chromosome cohesion during cell division by preventing premature dissociation of cohesin complex from centromeres after prophase, when most of cohesin complex dissociates from chromosomes arms. In Caenorhabditis briggsae, this protein is Shugoshin (sgo-1).